We begin with the raw amino-acid sequence, 244 residues long: Tegument protein UL51 (244 aa).

Residue Cys9 is the site of S-palmitoyl cysteine; by host attachment. The segment at 178 to 244 (GVTEAPSLGH…SRAAPCVLGQ (67 aa)) is disordered. Over residues 221-244 (PRPTASPTAPRPGPSRAAPCVLGQ) the composition is skewed to low complexity.

This sequence belongs to the herpesviridae UL51 family. In terms of assembly, oligomerizes. Interacts with UL7; this interaction mediates UL7 incorporation to virions. Interacts with UL14. Post-translationally, phosphorylated. In terms of processing, palmitoylation is necessary for Golgi localization.

Its subcellular location is the virion tegument. The protein resides in the host cytoplasm. It is found in the host Golgi apparatus. Its function is as follows. Plays several roles during the time course of infection, including egress of virus particles from the perinuclear space and secondary envelopment of cytoplasmic capsids that bud into specific trans-Golgi network (TGN)-derived membranes. Plays also an essential role in the maintenance of host cytoplasmic viral assembly center (cVAC) morphology in primary host neuronal cells. This chain is Tegument protein UL51, found in Homo sapiens (Human).